The chain runs to 279 residues: Urease accessory protein UreD (279 aa).

The protein belongs to the UreD family. As to quaternary structure, ureD, UreF and UreG form a complex that acts as a GTP-hydrolysis-dependent molecular chaperone, activating the urease apoprotein by helping to assemble the nickel containing metallocenter of UreC. The UreE protein probably delivers the nickel.

The protein resides in the cytoplasm. Its function is as follows. Required for maturation of urease via the functional incorporation of the urease nickel metallocenter. This is Urease accessory protein UreD from Trichormus variabilis (strain ATCC 29413 / PCC 7937) (Anabaena variabilis).